Reading from the N-terminus, the 367-residue chain is Flagellar P-ring protein (367 aa).

The signal sequence occupies residues Met-1 to Ala-24.

The protein belongs to the FlgI family. In terms of assembly, the basal body constitutes a major portion of the flagellar organelle and consists of four rings (L,P,S, and M) mounted on a central rod.

Its subcellular location is the periplasm. The protein resides in the bacterial flagellum basal body. Assembles around the rod to form the L-ring and probably protects the motor/basal body from shearing forces during rotation. The sequence is that of Flagellar P-ring protein from Syntrophotalea carbinolica (strain DSM 2380 / NBRC 103641 / GraBd1) (Pelobacter carbinolicus).